We begin with the raw amino-acid sequence, 144 residues long: MLISKRRLIHAISYEGILLVIIAIALSFIFNMPMEVTGTLGVFMAVVSVFWNMIFNHYFEKVEHKYNWERTIPVRILHAIGFEGGLLIATVPMIAYMMQMTVIDAFILDIGLTLCILVYTFIFQWCYDHIEDKFFPNAKAASLH.

4 consecutive transmembrane segments (helical) span residues 9-29, 35-55, 76-96, and 103-123; these read IHAI…LSFI, EVTG…NMIF, ILHA…MIAY, and IDAF…TFIF.

The protein belongs to the proteobacterial antimicrobial compound efflux (PACE) (TC 2.A.117) family. Exists in a monomer-homodimer equilibrium. The dimer is probably the functional form of the protein, and the assembly of the dimer is mediated by binding of chlorhexidine and promoted by high pH conditions.

The protein resides in the cell inner membrane. Protonation/deprotonation of Glu-15 may play an important role in transporter function. Cadaverin transport is inhibited in the presence of CCCP. Mediates the efflux of short-chain diamines when energized by an electrochemical gradient. Recognizes specifically the short-chain diamines cadaverine and putrescine as substrates, and promotes the active transport of these substrates in exchange for a cation. Protons are probably the primary source of energy for transport, however it was not possible to conclude with complete certainty that protons, rather than alternative cations such as Na(+) ions, are exchanged for substrates by AceI. In addition, is involved in resistance to the synthetic biocide chlorhexidine, a widely used antiseptic and disinfectant in both hospital and community settings. Interacts directly with chlorhexidine and mediates its efflux via an energy-dependent mechanism. The chain is Short-chain diamines transporter from Acinetobacter baumannii (strain ATCC 17978 / DSM 105126 / CIP 53.77 / LMG 1025 / NCDC KC755 / 5377).